A 250-amino-acid polypeptide reads, in one-letter code: 4-hydroxy-tetrahydrodipicolinate reductase (250 aa).

Residues 9-14, 79-81, and 103-106 each bind NAD(+); these read GATGKM, GTT, and SANM. Histidine 135 (proton donor/acceptor) is an active-site residue. Residue histidine 136 participates in (S)-2,3,4,5-tetrahydrodipicolinate binding. Residue lysine 139 is the Proton donor of the active site. 145–146 contacts (S)-2,3,4,5-tetrahydrodipicolinate; the sequence is GT.

Belongs to the DapB family.

The protein localises to the cytoplasm. The catalysed reaction is (S)-2,3,4,5-tetrahydrodipicolinate + NAD(+) + H2O = (2S,4S)-4-hydroxy-2,3,4,5-tetrahydrodipicolinate + NADH + H(+). It carries out the reaction (S)-2,3,4,5-tetrahydrodipicolinate + NADP(+) + H2O = (2S,4S)-4-hydroxy-2,3,4,5-tetrahydrodipicolinate + NADPH + H(+). It participates in amino-acid biosynthesis; L-lysine biosynthesis via DAP pathway; (S)-tetrahydrodipicolinate from L-aspartate: step 4/4. Functionally, catalyzes the conversion of 4-hydroxy-tetrahydrodipicolinate (HTPA) to tetrahydrodipicolinate. The sequence is that of 4-hydroxy-tetrahydrodipicolinate reductase from Rickettsia bellii (strain OSU 85-389).